A 175-amino-acid chain; its full sequence is ATP-dependent protease subunit HslV (175 aa).

Residue Thr-2 is part of the active site. Positions 157, 160, and 163 each coordinate Na(+).

Belongs to the peptidase T1B family. HslV subfamily. In terms of assembly, a double ring-shaped homohexamer of HslV is capped on each side by a ring-shaped HslU homohexamer. The assembly of the HslU/HslV complex is dependent on binding of ATP.

The protein localises to the cytoplasm. The enzyme catalyses ATP-dependent cleavage of peptide bonds with broad specificity.. With respect to regulation, allosterically activated by HslU binding. Protease subunit of a proteasome-like degradation complex believed to be a general protein degrading machinery. This is ATP-dependent protease subunit HslV from Photobacterium profundum (strain SS9).